A 948-amino-acid chain; its full sequence is ATPase 8, plasma membrane-type (948 aa).

At M1 to F64 the chain is on the cytoplasmic side. The helical transmembrane segment at L65–I84 threads the bilayer. Residues V85–W96 lie on the Extracellular side of the membrane. Residues Q97–E117 traverse the membrane as a helical segment. Residues N118–I246 are Cytoplasmic-facing. The chain crosses the membrane as a helical span at residues G247–P267. Over I268–G276 the chain is Extracellular. Residues I277–T294 form a helical membrane-spanning segment. Topologically, residues V295–K646 are cytoplasmic. The active-site 4-aspartylphosphate intermediate is the D332. Positions 591 and 595 each coordinate Mg(2+). Residues N647 to L668 form a helical membrane-spanning segment. Residues I669 to D673 lie on the Extracellular side of the membrane. A helical membrane pass occupies residues F674–D696. Topologically, residues R697–I712 are cytoplasmic. A helical transmembrane segment spans residues F713–L733. Residues A734 to E754 are Extracellular-facing. Residues E755–T775 form a helical membrane-spanning segment. Over R776 to G787 the chain is Cytoplasmic. Residues F788–A808 form a helical membrane-spanning segment. Over N809 to V816 the chain is Extracellular. Residues G817–L837 traverse the membrane as a helical segment. The Cytoplasmic segment spans residues D838 to V948. At T884 the chain carries Phosphothreonine. At S930 the chain carries Phosphoserine. Positions Y946–V948 are interaction with 14-3-3 proteins. T947 carries the post-translational modification Phosphothreonine.

This sequence belongs to the cation transport ATPase (P-type) (TC 3.A.3) family. Type IIIA subfamily. As to quaternary structure, binds to 14-3-3 proteins. The binding is induced by phosphorylation of Thr-947. Binding to 14-3-3 proteins activates the H(+)-ATPase. Expressed in guard cells, roots and leaves, and barely in mesophyll cells.

The protein resides in the membrane. The catalysed reaction is ATP + H2O + H(+)(in) = ADP + phosphate + 2 H(+)(out). In terms of biological role, the plasma membrane H(+) ATPase of plants and fungi generates a proton gradient that drives the active transport of nutrients by H(+)-symport. The resulting external acidification and/or internal alkinization may mediate growth responses. The sequence is that of ATPase 8, plasma membrane-type (AHA8) from Arabidopsis thaliana (Mouse-ear cress).